A 261-amino-acid polypeptide reads, in one-letter code: Protein FAM78B (261 aa).

This sequence belongs to the FAM78 family.

This is Protein FAM78B (FAM78B) from Homo sapiens (Human).